We begin with the raw amino-acid sequence, 203 residues long: uncharacterized protein (203 aa).

The helical transmembrane segment at cysteine 89–leucine 109 threads the bilayer.

It is found in the membrane. This is an uncharacterized protein from Saccharomyces cerevisiae (strain ATCC 204508 / S288c) (Baker's yeast).